Here is a 495-residue protein sequence, read N- to C-terminus: Major facilitator-type transporter hxnP (495 aa).

Positions 1–24 (MGATATDIEKVPSAGTPDEPKAGE) are disordered. A run of 5 helical transmembrane segments spans residues 36–55 (SFVRKVDFFVLPMLCLMYFF), 84–104 (LLILLFYIPFGLFDLPWNLLI), 123–143 (VWGICALCQCAANNFGGLLAI), 145–165 (IILGVFEAGFFAGSTFYFTLF), and 177–197 (VLQSFAVLASAFSGLISFGLF). Asn-200 carries an N-linked (GlcNAc...) asparagine glycan. 5 helical membrane-spanning segments follow: residues 209–229 (WLFIVEGAMTLIIGVIGFWWL), 282–302 (VITFSYPVAYATAMNFFPIIV), 314–334 (LWTVAPNLVGAVVLLVVAKSS), 341–361 (SLHIIFSLTVSLVGMLILASI), and 368–388 (GVSYFACFLLASGAYIPTCLV). Asn-395 carries N-linked (GlcNAc...) asparagine glycosylation. Helical transmembrane passes span 404–424 (ANTGFFVGLGNIAGVLSAATF) and 436–456 (LVATCACNGVCILATAFMGTW).

Belongs to the major facilitator superfamily.

The protein resides in the cell membrane. In terms of biological role, major facilitator-type transporter, part of the hnx cluster involved in the purine degradation. The nicotinate hydroxylase hnxS accepts nicotinate as a substrate and catalyzes the first step of nicotinate catabolism. The major facilitator-type transporters hxnP and hxnZ are probably involved in the uptake of nicotinate-derived metabolites, and the oxidoreductases hxnT and hxnY in the further metabolism of 6-OH nicotinic acid. In Emericella nidulans (strain FGSC A4 / ATCC 38163 / CBS 112.46 / NRRL 194 / M139) (Aspergillus nidulans), this protein is Major facilitator-type transporter hxnP.